We begin with the raw amino-acid sequence, 553 residues long: MLSVRVAAAVVRALPRRAGLVSRNALGSSFIAARNFHASNTHLQKTGTAEMSSILEERILGADTSVDLEETGRVLSIGDGIARVHGLRNVQAEEMVEFSSGLKGMSLNLEPDNVGVVVFGNDKLIKEGDIVKRTGAIVDVPVGEELLGRVVDALGNAIDGKGPIGSKTRRRVGLKAPGIIPRISVREPMQTGIKAVDSLVPIGRGQRELIIGDRQTGKTSIAIDTIINQKRFNDGSDEKKKLYCIYVAIGQKRSTVAQLVKRLTDADAMKYTIVVSATASDAAPLQYLAPYSGCSMGEYFRDNGKHALIIYDDLSKQAVAYRQMSLLLRRPPGREAYPGDVFYLHSRLLERAAKMNDAFGGGSLTALPVIETQAGDVSAYIPTNVISITDGQIFLETELFYKGIRPAINVGLSVSRVGSAAQTRAMKQVAGTMKLELAQYREVAAFAQFGSDLDAATQQLLSRGVRLTELLKQGQYSPMAIEEQVAVIYAGVRGYLDKLEPSKITKFENAFLSHVVSQHQALLGTIRADGKISEQSDAKLKEIVTNFLAGFEA.

Residues 1–43 (MLSVRVAAAVVRALPRRAGLVSRNALGSSFIAARNFHASNTHL) constitute a mitochondrion transit peptide. Phosphoserine occurs at positions 53 and 65. Residue serine 76 is modified to Phosphoserine; alternate. Serine 76 carries an O-linked (GlcNAc) serine; alternate glycan. A Phosphoserine modification is found at serine 106. 3 positions are modified to N6-acetyllysine: lysine 123, lysine 126, and lysine 132. Position 134 is a phosphothreonine (threonine 134). Residue lysine 161 is modified to N6-acetyllysine; alternate. Lysine 161 carries the N6-succinyllysine; alternate modification. Phosphoserine is present on serine 166. Residue lysine 167 is modified to N6-acetyllysine; alternate. Position 167 is an N6-succinyllysine; alternate (lysine 167). Serine 184 bears the Phosphoserine mark. Arginine 204 is subject to Omega-N-methylarginine. Glutamine 215, glycine 217, lysine 218, threonine 219, and serine 220 together coordinate ATP. Threonine 219 serves as a coordination point for Mg(2+). Residues lysine 230 and lysine 239 each carry the N6-acetyllysine; alternate modification. 2 positions are modified to N6-succinyllysine; alternate: lysine 230 and lysine 239. At lysine 240 the chain carries N6-acetyllysine. N6-acetyllysine; alternate occurs at positions 261 and 305. Residues lysine 261 and lysine 305 each carry the N6-succinyllysine; alternate modification. Aspartate 312 is a binding site for Mg(2+). Lysine 427 bears the N6-acetyllysine; alternate mark. Lysine 427 carries the N6-succinyllysine; alternate modification. Position 434 is an N6-acetyllysine (lysine 434). ATP-binding residues include glutamine 473 and glutamine 475. Residues lysine 498, lysine 506, lysine 531, and lysine 539 each carry the N6-acetyllysine; alternate modification. Residues lysine 498, lysine 506, lysine 531, and lysine 539 each carry the N6-succinyllysine; alternate modification. Residue lysine 541 is modified to N6-acetyllysine.

Belongs to the ATPase alpha/beta chains family. Homotrimer. Component of the ATP synthase complex composed at least of ATP5F1A/subunit alpha, ATP5F1B/subunit beta, ATP5MC1/subunit c (homooctomer), MT-ATP6/subunit a, MT-ATP8/subunit 8, ATP5ME/subunit e, ATP5MF/subunit f, ATP5MG/subunit g, ATP5MK/subunit k, ATP5MJ/subunit j, ATP5F1C/subunit gamma, ATP5F1D/subunit delta, ATP5F1E/subunit epsilon, ATP5PF/subunit F6, ATP5PB/subunit b, ATP5PD/subunit d, ATP5PO/subunit OSCP. ATP synthase complex consists of a soluble F(1) head domain (subunits alpha(3) and beta(3)) - the catalytic core - and a membrane F(0) domain - the membrane proton channel (subunits c, a, 8, e, f, g, k and j). These two domains are linked by a central stalk (subunits gamma, delta, and epsilon) rotating inside the F1 region and a stationary peripheral stalk (subunits F6, b, d, and OSCP). Interacts with ATPAF2. Interacts with HRG; the interaction occurs on the surface of T-cells and alters the cell morphology when associated with concanavalin (in vitro). Interacts with PLG (angiostatin peptide); the interaction inhibits most of the angiogenic properties of angiostatin. Interacts with BLOC1S1. Interacts with BCL2L1 isoform BCL-X(L); the interaction mediates the association of BCL2L1 isoform BCL-X(L) with the mitochondrial membrane F(1)F(0) ATP synthase and enhances neurons metabolic efficiency. Interacts with CLN5 and PPT1. Interacts with S100A1; this interaction increases F1-ATPase activity. Interacts with ABCB7; this interaction allows the regulation of cellular iron homeostasis and cellular reactive oxygen species (ROS) levels in cardiomyocytes. In terms of processing, acetylated on lysine residues. BLOC1S1 is required for acetylation.

Its subcellular location is the mitochondrion inner membrane. The protein localises to the cell membrane. In terms of biological role, subunit alpha, of the mitochondrial membrane ATP synthase complex (F(1)F(0) ATP synthase or Complex V) that produces ATP from ADP in the presence of a proton gradient across the membrane which is generated by electron transport complexes of the respiratory chain. ATP synthase complex consist of a soluble F(1) head domain - the catalytic core - and a membrane F(1) domain - the membrane proton channel. These two domains are linked by a central stalk rotating inside the F(1) region and a stationary peripheral stalk. During catalysis, ATP synthesis in the catalytic domain of F(1) is coupled via a rotary mechanism of the central stalk subunits to proton translocation. In vivo, can only synthesize ATP although its ATP hydrolase activity can be activated artificially in vitro. With the catalytic subunit beta (ATP5F1B), forms the catalytic core in the F(1) domain. Subunit alpha does not bear the catalytic high-affinity ATP-binding sites. This is ATP synthase F(1) complex subunit alpha, mitochondrial from Pan troglodytes (Chimpanzee).